A 340-amino-acid polypeptide reads, in one-letter code: Branched-chain-amino-acid aminotransferase (340 aa).

The residue at position 187 (Lys187) is an N6-(pyridoxal phosphate)lysine.

This sequence belongs to the class-IV pyridoxal-phosphate-dependent aminotransferase family. Requires pyridoxal 5'-phosphate as cofactor.

The catalysed reaction is L-leucine + 2-oxoglutarate = 4-methyl-2-oxopentanoate + L-glutamate. It carries out the reaction L-isoleucine + 2-oxoglutarate = (S)-3-methyl-2-oxopentanoate + L-glutamate. The enzyme catalyses L-valine + 2-oxoglutarate = 3-methyl-2-oxobutanoate + L-glutamate. It functions in the pathway amino-acid biosynthesis; L-isoleucine biosynthesis; L-isoleucine from 2-oxobutanoate: step 4/4. It participates in amino-acid biosynthesis; L-leucine biosynthesis; L-leucine from 3-methyl-2-oxobutanoate: step 4/4. The protein operates within amino-acid biosynthesis; L-valine biosynthesis; L-valine from pyruvate: step 4/4. In terms of biological role, acts on leucine, isoleucine and valine. This Helicobacter pylori (strain J99 / ATCC 700824) (Campylobacter pylori J99) protein is Branched-chain-amino-acid aminotransferase (ilvE).